Reading from the N-terminus, the 268-residue chain is Ubiquinone biosynthesis protein COQ4 homolog, mitochondrial (268 aa).

The N-terminal 25 residues, 1–25 (MMQRCLRLQKPLALRRGLHLAQVNS), are a transit peptide targeting the mitochondrion. Zn(2+) contacts are provided by His171, Asp172, His175, and Glu187.

The protein belongs to the COQ4 family. In terms of assembly, component of a multi-subunit COQ enzyme complex. Requires Zn(2+) as cofactor.

Its subcellular location is the mitochondrion inner membrane. It catalyses the reaction a 4-hydroxy-3-methoxy-5-(all-trans-polyprenyl)benzoate + H(+) = a 2-methoxy-6-(all-trans-polyprenyl)phenol + CO2. The protein operates within cofactor biosynthesis; ubiquinone biosynthesis. In terms of biological role, lyase that catalyzes the C1-decarboxylation of 4-hydroxy-3-methoxy-5-(all-trans-polyprenyl)benzoic acid into 2-methoxy-6-(all-trans-polyprenyl)phenol during ubiquinone biosynthesis. In Drosophila simulans (Fruit fly), this protein is Ubiquinone biosynthesis protein COQ4 homolog, mitochondrial.